A 575-amino-acid polypeptide reads, in one-letter code: Chaperonin 60 subunit alpha 2, chloroplastic (575 aa).

Positions Met1–Arg18 are enriched in low complexity. Residues Met1–Lys27 form a disordered region. The transit peptide at Met1–Arg32 directs the protein to the chloroplast.

It belongs to the chaperonin (HSP60) family. As to quaternary structure, part of the Cpn60 complex composed of 7 alpha and 7 beta subunits.

Its subcellular location is the plastid. The protein resides in the chloroplast. Involved in protein assisted folding. This Arabidopsis thaliana (Mouse-ear cress) protein is Chaperonin 60 subunit alpha 2, chloroplastic (CPN60A2).